Here is a 244-residue protein sequence, read N- to C-terminus: tRNA pseudouridine synthase B (244 aa).

Asp46 (nucleophile) is an active-site residue.

Belongs to the pseudouridine synthase TruB family. Type 1 subfamily.

It catalyses the reaction uridine(55) in tRNA = pseudouridine(55) in tRNA. Responsible for synthesis of pseudouridine from uracil-55 in the psi GC loop of transfer RNAs. This chain is tRNA pseudouridine synthase B, found in Bordetella avium (strain 197N).